Here is a 553-residue protein sequence, read N- to C-terminus: Chaperonin GroEL (553 aa).

ATP contacts are provided by residues 30–33 (TLGP), lysine 51, 87–91 (DGTTT), glycine 415, and aspartate 495.

The protein belongs to the chaperonin (HSP60) family. In terms of assembly, forms a cylinder of 14 subunits composed of two heptameric rings stacked back-to-back. Interacts with the co-chaperonin GroES.

Its subcellular location is the cytoplasm. The catalysed reaction is ATP + H2O + a folded polypeptide = ADP + phosphate + an unfolded polypeptide.. Together with its co-chaperonin GroES, plays an essential role in assisting protein folding. The GroEL-GroES system forms a nano-cage that allows encapsulation of the non-native substrate proteins and provides a physical environment optimized to promote and accelerate protein folding. The sequence is that of Chaperonin GroEL from Buchnera aphidicola subsp. Tuberolachnus salignus.